The chain runs to 528 residues: FAD-dependent monooxygenase DEP2 (528 aa).

The signal sequence occupies residues 1–23 (MEDGRSTFKVIIIGAGVTGLTLA). FAD-binding residues include Asp-37, Arg-110, Asp-311, and Gly-324. Residues 479-499 (VFPQILGVLMVMWSSVWLFHL) form a helical membrane-spanning segment. N-linked (GlcNAc...) asparagine glycosylation is present at Asn-521.

It belongs to the paxM FAD-dependent monooxygenase family. The cofactor is FAD.

Its subcellular location is the membrane. It participates in polyketide biosynthesis. In terms of biological role, FAD-dependent monooxygenase; part of the gene cluster that mediates the biosynthesis of depudecin, a highly oxidized eleven-carbon linear polyketide that acts as a histone deacetylase (HDAC) inhibitor and makes a small contribution to pathogenesis. The reducing polyketide synthase DEP5 is the central enzyme in depudecin biosynthesis by yielding the backbone polyketide chain. The monooxygenases DEP2 and DEP4, as well as the uncharacterized protein DEP1, then act as tailoring enzymes to modify the intermediate polyketide chain into depudecin. The polypeptide is FAD-dependent monooxygenase DEP2 (Alternaria brassicicola (Dark leaf spot agent)).